A 134-amino-acid chain; its full sequence is Large ribosomal subunit protein bL20 (134 aa).

It belongs to the bacterial ribosomal protein bL20 family.

In terms of biological role, binds directly to 23S ribosomal RNA and is necessary for the in vitro assembly process of the 50S ribosomal subunit. It is not involved in the protein synthesizing functions of that subunit. This chain is Large ribosomal subunit protein bL20, found in Sinorhizobium medicae (strain WSM419) (Ensifer medicae).